A 370-amino-acid polypeptide reads, in one-letter code: Thiamine-repressible mitochondrial transport protein THI74 (370 aa).

Over 1 to 10 (MNRVGIDVDH) the chain is Cytoplasmic. Residues 11–31 (MIGVLLLAVVVVFWVGASCLT) traverse the membrane as a helical segment. Topologically, residues 32-42 (NELLETNAYNK) are mitochondrial intermembrane. A helical membrane pass occupies residues 43-63 (PFFLTYLNISSFALYLTPDLW). Residues 64-119 (RIIQSRRKSLQERTERTLPIHTQESFSEFLPLLSSTPSTSSNLSSIADTKVKDTMR) lie on the Cytoplasmic side of the membrane. The helical transmembrane segment at 120–140 (LSLLFCVLWFVANLAANAALS) threads the bilayer. Residues 129 to 190 (FVANLAANAA…SLFGIILIVM (62 aa)) form the EamA domain. Topologically, residues 141–146 (YTTVAS) are mitochondrial intermembrane. A helical transmembrane segment spans residues 147 to 167 (STILSSTSSFFTLFLATSLGI). At 168 to 169 (ET) the chain is on the cytoplasmic side. The helical transmembrane segment at 170-190 (FSTKKLLGLFVSLFGIILIVM) threads the bilayer. Topologically, residues 191–203 (QSSKQQDSVSASS) are mitochondrial intermembrane. The helical transmembrane segment at 204–224 (FLVGNTLALLGSLGYSVYTTL) threads the bilayer. Over 225–239 (LKYEISSKGLRLDIQ) the chain is Cytoplasmic. Residues 240–260 (MFLGYVGIFTFLLFWPILIIL) form a helical membrane-spanning segment. Over 261–273 (DITHMETFELPSN) the chain is Mitochondrial intermembrane. The chain crosses the membrane as a helical span at residues 274–294 (FHISFLVMLNCIIIFVSDYFW). Residues 295–303 (CKALILTSP) lie on the Cytoplasmic side of the membrane. Residues 304-324 (LVVTVALTFTIPLAMFADFVW) form a helical membrane-spanning segment. The Mitochondrial intermembrane segment spans residues 325–326 (RE). Residues 327-347 (AFFTPWYIIGVIFIFVSFFLV) form a helical membrane-spanning segment. The Cytoplasmic portion of the chain corresponds to 348 to 370 (NHRGESAVEKDCAAVEKGPILDA).

It is found in the mitochondrion membrane. In terms of biological role, may be involved in thiaminediphosphate transport across the mitochondrial membrane. This chain is Thiamine-repressible mitochondrial transport protein THI74 (THI74), found in Saccharomyces cerevisiae (strain ATCC 204508 / S288c) (Baker's yeast).